We begin with the raw amino-acid sequence, 340 residues long: Ketol-acid reductoisomerase (NADP(+)) (340 aa).

Residues 3–183 enclose the KARI N-terminal Rossmann domain; it reads INVFYDKDCN…GGGRTGIIET (181 aa). Residues 26–29, R49, S54, and 84–87 contribute to the NADP(+) site; these read FGSQ and DENQ. H109 is a catalytic residue. Position 135 (G135) interacts with NADP(+). The 146-residue stretch at 184–329 folds into the KARI C-terminal knotted domain; the sequence is TFKDETETDL…VKLRNMMPWI (146 aa). Residues D192, E196, E228, and E232 each contribute to the Mg(2+) site. S253 is a binding site for substrate.

It belongs to the ketol-acid reductoisomerase family. Requires Mg(2+) as cofactor.

It carries out the reaction (2R)-2,3-dihydroxy-3-methylbutanoate + NADP(+) = (2S)-2-acetolactate + NADPH + H(+). It catalyses the reaction (2R,3R)-2,3-dihydroxy-3-methylpentanoate + NADP(+) = (S)-2-ethyl-2-hydroxy-3-oxobutanoate + NADPH + H(+). The protein operates within amino-acid biosynthesis; L-isoleucine biosynthesis; L-isoleucine from 2-oxobutanoate: step 2/4. Its pathway is amino-acid biosynthesis; L-valine biosynthesis; L-valine from pyruvate: step 2/4. Its function is as follows. Involved in the biosynthesis of branched-chain amino acids (BCAA). Catalyzes an alkyl-migration followed by a ketol-acid reduction of (S)-2-acetolactate (S2AL) to yield (R)-2,3-dihydroxy-isovalerate. In the isomerase reaction, S2AL is rearranged via a Mg-dependent methyl migration to produce 3-hydroxy-3-methyl-2-ketobutyrate (HMKB). In the reductase reaction, this 2-ketoacid undergoes a metal-dependent reduction by NADPH to yield (R)-2,3-dihydroxy-isovalerate. The polypeptide is Ketol-acid reductoisomerase (NADP(+)) (Aliarcobacter butzleri (strain RM4018) (Arcobacter butzleri)).